A 416-amino-acid chain; its full sequence is Probable 26S proteasome regulatory subunit rpn-6.2 (416 aa).

The PCI domain maps to 217 to 386 (YKTSFSYFYE…DTVVVYPKAD (170 aa)).

The protein belongs to the proteasome subunit S9 family. In terms of assembly, component of the lid subcomplex of the 19S proteasome regulatory particle complex (also named PA700 complex). The 26S proteasome consists of a 20S proteasome core and two 19S regulatory subunits.

Its function is as follows. Component of the lid subcomplex of the 26S proteasome, a multiprotein complex involved in the ATP-dependent degradation of ubiquitinated proteins. In the complex, rpn-6.2 is required for proteasome assembly. The sequence is that of Probable 26S proteasome regulatory subunit rpn-6.2 (rpn-6.2) from Caenorhabditis elegans.